Reading from the N-terminus, the 186-residue chain is Methyl-CpG-binding domain protein 3-like 1 (186 aa).

The segment at Met1–Ser104 is transcription repressor.

The protein belongs to the MBD3L family. As to expression, highly expressed in testis. Not detected in the other tissues tested.

The protein localises to the nucleus. In terms of biological role, transcriptional repressor. In Mus musculus (Mouse), this protein is Methyl-CpG-binding domain protein 3-like 1 (Mbd3l1).